We begin with the raw amino-acid sequence, 248 residues long: PF03932 family protein CutC (248 aa).

Belongs to the CutC family. As to quaternary structure, homodimer.

It is found in the cytoplasm. In Escherichia coli O7:K1 (strain IAI39 / ExPEC), this protein is PF03932 family protein CutC.